The primary structure comprises 32 residues: Yop proteins translocation protein A (32 aa).

The sequence is that of Yop proteins translocation protein A (yscA) from Yersinia enterocolitica serotype O:8 / biotype 1B (strain NCTC 13174 / 8081).